Consider the following 295-residue polypeptide: 4-hydroxybenzoate octaprenyltransferase (295 aa).

8 helical membrane-spanning segments follow: residues 28 to 48 (AGWL…AGGF), 51 to 71 (WHLL…GCCV), 101 to 121 (ALGV…TTNA), 124 to 144 (IAWS…KRFV), 159 to 179 (IPMA…WLVL), 220 to 240 (VMAF…PFGL), 242 to 262 (WPLH…WRLI), and 274 to 294 (FTGN…GFAL).

Belongs to the UbiA prenyltransferase family. Mg(2+) serves as cofactor.

Its subcellular location is the cell inner membrane. It catalyses the reaction all-trans-octaprenyl diphosphate + 4-hydroxybenzoate = 4-hydroxy-3-(all-trans-octaprenyl)benzoate + diphosphate. Its pathway is cofactor biosynthesis; ubiquinone biosynthesis. Functionally, catalyzes the prenylation of para-hydroxybenzoate (PHB) with an all-trans polyprenyl group. Mediates the second step in the final reaction sequence of ubiquinone-8 (UQ-8) biosynthesis, which is the condensation of the polyisoprenoid side chain with PHB, generating the first membrane-bound Q intermediate 3-octaprenyl-4-hydroxybenzoate. The chain is 4-hydroxybenzoate octaprenyltransferase from Paracidovorax citrulli (strain AAC00-1) (Acidovorax citrulli).